Here is a 470-residue protein sequence, read N- to C-terminus: E3 ubiquitin-protein ligase TRIM21 (470 aa).

Residues 20–59 (CSICLDPMVEPMSIECGHCFCKECIFEVGKNGGSSCPECR) form an RING-type zinc finger. Zn(2+) is bound by residues Cys-96, His-99, Cys-118, and His-124. The B box-type zinc finger occupies 96 to 127 (CMKHGEKLHLFCEEDGQALCWVCAQSGKHRDH). Positions 188-250 (LQNSLLAQEE…RGSELELLQE (63 aa)) form a coiled coil. Positions 272-470 (DLTSTCPVPG…APLKLCPLKM (199 aa)) constitute a B30.2/SPRY domain.

The protein belongs to the TRIM/RBCC family. Homotrimer. Component of a SCF(SKP2)-like complex containing CUL1, SKP1, TRIM21 and SKP2. Interacts with CALR, CUL1, FBXW11, HSPA5, IKBKB, IRF3, SKP1 and VCP. Interacts with SKP2; the interaction with SKP2 does not depend on an intact F-box domain. Interacts (via N-terminus and C-terminus) with DCP2 (via N-terminus and C-terminus). Interacts (via C-terminus) with IRF8 (via C-terminus). Interacts with ULK1, BECN1 and with ATG8 family members, including GABARAP, GABARAPL1, GABARAPL2 and MAP1LC3C/LC3C. Interacts with TRIM21 and SQSTM1/sequestosome 1. Interacts with IRF3. Interacts (via the SPRY domain) with NMI (via coiled-coil domain); the interaction promotes 'Lys-63'-linked ubiquitination of NMI. Interacts with IFI35 and NMI; the interaction facilitates NMI-IFI35 complex formation. Autoubiquitinated; does not lead to its proteasomal degradation. Deubiquitinated by USP4; leading to its stabilization. Autoubiquitinated.

The protein localises to the cytoplasm. It is found in the cytoplasmic vesicle. The protein resides in the autophagosome. Its subcellular location is the nucleus. It localises to the P-body. The protein localises to the stress granule. The catalysed reaction is S-ubiquitinyl-[E2 ubiquitin-conjugating enzyme]-L-cysteine + [acceptor protein]-L-lysine = [E2 ubiquitin-conjugating enzyme]-L-cysteine + N(6)-ubiquitinyl-[acceptor protein]-L-lysine.. It participates in protein modification; protein ubiquitination. E3 ubiquitin-protein ligase whose activity is dependent on E2 enzymes, UBE2D1, UBE2D2, UBE2E1 and UBE2E2. Forms a ubiquitin ligase complex in cooperation with the E2 UBE2D2 that is used not only for the ubiquitination of USP4 and IKBKB but also for its self-ubiquitination. Component of cullin-RING-based SCF (SKP1-CUL1-F-box protein) E3 ubiquitin-protein ligase complexes such as SCF(SKP2)-like complexes. A TRIM21-containing SCF(SKP2)-like complex is shown to mediate ubiquitination of CDKN1B ('Thr-187' phosphorylated-form), thereby promoting its degradation by the proteasome. Monoubiquitinates IKBKB that will negatively regulates Tax-induced NF-kappa-B signaling. Negatively regulates IFN-beta production post-pathogen recognition by catalyzing polyubiquitin-mediated degradation of IRF3. Mediates the ubiquitin-mediated proteasomal degradation of IgG1 heavy chain, which is linked to the VCP-mediated ER-associated degradation (ERAD) pathway. Promotes IRF8 ubiquitination, which enhanced the ability of IRF8 to stimulate cytokine genes transcription in macrophages. Plays a role in the regulation of the cell cycle progression. Enhances the decapping activity of DCP2. Exists as a ribonucleoprotein particle present in all mammalian cells studied and composed of a single polypeptide and one of four small RNA molecules. At least two isoforms are present in nucleated and red blood cells, and tissue specific differences in RO/SSA proteins have been identified. The common feature of these proteins is their ability to bind HY RNAs.2. Involved in the regulation of innate immunity and the inflammatory response in response to IFNG/IFN-gamma. Organizes autophagic machinery by serving as a platform for the assembly of ULK1, Beclin 1/BECN1 and ATG8 family members and recognizes specific autophagy targets, thus coordinating target recognition with assembly of the autophagic apparatus and initiation of autophagy. Also regulates autophagy through FIP200/RB1CC1 ubiquitination and subsequent decreased protein stability. Represses the innate antiviral response by facilitating the formation of the NMI-IFI35 complex through 'Lys-63'-linked ubiquitination of NMI. During viral infection, promotes cell pyroptosis by mediating 'Lys-6'-linked ubiquitination of ISG12a/IFI27, facilitating its translocation into the mitochondria and subsequent CASP3 activation. When up-regulated through the IFN/JAK/STAT signaling pathway, promotes 'Lys-27'-linked ubiquitination of MAVS, leading to the recruitment of TBK1 and up-regulation of innate immunity. Mediates 'Lys-63'-linked polyubiquitination of G3BP1 in response to heat shock, leading to stress granule disassembly. The chain is E3 ubiquitin-protein ligase TRIM21 (Trim21) from Mus musculus (Mouse).